The sequence spans 92 residues: MPRSLKKGPFIDLHLLKKVEKAVESGDKKPIKTWSRRSMIIPTMIGLTIAVHNGRQHVPVFVTDEMIGHKLGEFAPTRTYRGHAADKKAKKR.

The protein belongs to the universal ribosomal protein uS19 family.

In terms of biological role, protein S19 forms a complex with S13 that binds strongly to the 16S ribosomal RNA. The chain is Small ribosomal subunit protein uS19 from Vibrio parahaemolyticus serotype O3:K6 (strain RIMD 2210633).